We begin with the raw amino-acid sequence, 514 residues long: Glutathione-binding protein GsiB (514 aa).

A signal peptide spans 1 to 26; it reads MARAVHRSGLVALGIATALMASCAFA.

This sequence belongs to the bacterial solute-binding protein 5 family. As to quaternary structure, the complex is composed of two ATP-binding proteins (GsiA), two transmembrane proteins (GsiC and GsiD) and a solute-binding protein (GsiB).

Its subcellular location is the periplasm. Functionally, part of the ABC transporter complex GsiABCD involved in glutathione import. Binds glutathione. This Shigella flexneri serotype 5b (strain 8401) protein is Glutathione-binding protein GsiB.